Consider the following 487-residue polypeptide: Malonate-semialdehyde dehydrogenase (487 aa).

Ala-150, Phe-152, Lys-176, Glu-179, Arg-180, Ser-229, and Thr-251 together coordinate NAD(+). The active-site Nucleophile is the Cys-284. Glu-382 contributes to the NAD(+) binding site.

This sequence belongs to the aldehyde dehydrogenase family. IolA subfamily. In terms of assembly, homotetramer.

The enzyme catalyses 3-oxopropanoate + NAD(+) + CoA + H2O = hydrogencarbonate + acetyl-CoA + NADH + H(+). It carries out the reaction 2-methyl-3-oxopropanoate + NAD(+) + CoA + H2O = propanoyl-CoA + hydrogencarbonate + NADH + H(+). Its pathway is polyol metabolism; myo-inositol degradation into acetyl-CoA; acetyl-CoA from myo-inositol: step 7/7. In terms of biological role, catalyzes the oxidation of malonate semialdehyde (MSA) and methylmalonate semialdehyde (MMSA) into acetyl-CoA and propanoyl-CoA, respectively. Is involved in a myo-inositol catabolic pathway. Bicarbonate, and not CO2, is the end-product of the enzymatic reaction. The sequence is that of Malonate-semialdehyde dehydrogenase from Bacillus subtilis (strain 168).